Consider the following 197-residue polypeptide: Pyridoxal 5'-phosphate synthase subunit PdxT (197 aa).

52–54 (GES) is a binding site for L-glutamine. Catalysis depends on Cys-83, which acts as the Nucleophile. Residues Arg-115 and 142–143 (IR) each bind L-glutamine. Active-site charge relay system residues include His-178 and Glu-180.

The protein belongs to the glutaminase PdxT/SNO family. In the presence of PdxS, forms a dodecamer of heterodimers. Only shows activity in the heterodimer.

The enzyme catalyses aldehydo-D-ribose 5-phosphate + D-glyceraldehyde 3-phosphate + L-glutamine = pyridoxal 5'-phosphate + L-glutamate + phosphate + 3 H2O + H(+). The catalysed reaction is L-glutamine + H2O = L-glutamate + NH4(+). The protein operates within cofactor biosynthesis; pyridoxal 5'-phosphate biosynthesis. Catalyzes the hydrolysis of glutamine to glutamate and ammonia as part of the biosynthesis of pyridoxal 5'-phosphate. The resulting ammonia molecule is channeled to the active site of PdxS. This Korarchaeum cryptofilum (strain OPF8) protein is Pyridoxal 5'-phosphate synthase subunit PdxT.